The chain runs to 191 residues: Peptidyl-tRNA hydrolase (191 aa).

Tyr14 serves as a coordination point for tRNA. His19 (proton acceptor) is an active-site residue. Tyr64, Asn66, and Asn112 together coordinate tRNA.

This sequence belongs to the PTH family. Monomer.

Its subcellular location is the cytoplasm. It catalyses the reaction an N-acyl-L-alpha-aminoacyl-tRNA + H2O = an N-acyl-L-amino acid + a tRNA + H(+). Its function is as follows. Hydrolyzes ribosome-free peptidyl-tRNAs (with 1 or more amino acids incorporated), which drop off the ribosome during protein synthesis, or as a result of ribosome stalling. In terms of biological role, catalyzes the release of premature peptidyl moieties from peptidyl-tRNA molecules trapped in stalled 50S ribosomal subunits, and thus maintains levels of free tRNAs and 50S ribosomes. The polypeptide is Peptidyl-tRNA hydrolase (Clostridium botulinum (strain Eklund 17B / Type B)).